The sequence spans 447 residues: Voltage-gated purine nucleotide uniporter SLC17A9 (447 aa).

The segment at 1–26 is disordered; sequence MPSQRSSLMQPIPEETRKTPSAAAED. 11 consecutive transmembrane segments (helical) span residues 40 to 60, 74 to 94, 103 to 123, 129 to 149, 169 to 189, 192 to 212, 252 to 272, 287 to 307, 327 to 347, 380 to 400, and 413 to 433; these read ILLLGTCLLYCARVTMPVCTV, GIVLSSFFWGYCLTQVVGGHL, VILLSASAWGFITVTTPLLAH, LAFLTFSRILTGLLQGVYFPA, TVGAGSQVGTLVTGGVGSVLL, CGWQSVFYFSGGLTLLWAYYV, VWAAICSQLCSACSFFILLSW, WVFNVVPWMLAIPASLFSGFI, VMGLGLSSIFALCLGHTTSFL, GFLFGVANTAGALAGVVGVCL, and CVFHLVAIISNLGLGTFLVFG.

It belongs to the major facilitator superfamily. Sodium/anion cotransporter family. As to expression, in brain, specifically expressed in the medulla and is associated with chromaffin granules (at protein level). Predominantly expressed in adrenal gland, brain and thyroid.

The protein resides in the cytoplasmic vesicle. It is found in the secretory vesicle. The protein localises to the chromaffin granule membrane. It localises to the secretory vesicle membrane. Its subcellular location is the lysosome membrane. The enzyme catalyses ATP(in) = ATP(out). It catalyses the reaction ADP(in) = ADP(out). It carries out the reaction GTP(in) = GTP(out). Its activity is regulated as follows. Activity is chloride-dependent. Functionally, voltage-gated ATP nucleotide uniporter that can also transport the purine nucleotides ADP and GTP. Uses the membrane potential as the driving force to control ATP accumulation in lysosomes and secretory vesicles. By controlling ATP storage in lysosomes, regulates ATP-dependent proteins of these organelles. Also indirectly regulates the exocytosis of ATP through its import into lysosomes in astrocytes and secretory vesicles such as adrenal chromaffin granules, mucin granules and synaptic vesicles. In Mus musculus (Mouse), this protein is Voltage-gated purine nucleotide uniporter SLC17A9.